Consider the following 286-residue polypeptide: GTP-binding protein 8 (286 aa).

In terms of domain architecture, EngB-type G spans 105–278 (KQPEVCFMGR…RCFIAHVTGK (174 aa)). GTP contacts are provided by residues 113–120 (GRSNVGKS), 142–146 (GHTKK), 160–163 (DMPG), 222–225 (TKID), and 257–259 (VSS). Mg(2+) contacts are provided by S120 and T144.

This sequence belongs to the TRAFAC class TrmE-Era-EngA-EngB-Septin-like GTPase superfamily. EngB GTPase family. The cofactor is Mg(2+).

In Danio rerio (Zebrafish), this protein is GTP-binding protein 8 (gtpbp8).